The chain runs to 269 residues: Indole-3-glycerol phosphate synthase (269 aa).

It belongs to the TrpC family.

It carries out the reaction 1-(2-carboxyphenylamino)-1-deoxy-D-ribulose 5-phosphate + H(+) = (1S,2R)-1-C-(indol-3-yl)glycerol 3-phosphate + CO2 + H2O. It functions in the pathway amino-acid biosynthesis; L-tryptophan biosynthesis; L-tryptophan from chorismate: step 4/5. In Saccharopolyspora erythraea (strain ATCC 11635 / DSM 40517 / JCM 4748 / NBRC 13426 / NCIMB 8594 / NRRL 2338), this protein is Indole-3-glycerol phosphate synthase.